A 334-amino-acid polypeptide reads, in one-letter code: Oligopeptide transport ATP-binding protein OppF (334 aa).

In terms of domain architecture, ABC transporter spans 12-265; it reads LEIADLKVHF…PLHPYTKALM (254 aa). 57 to 64 serves as a coordination point for ATP; that stretch reads GESGCGKS.

Belongs to the ABC transporter superfamily. The complex is composed of two ATP-binding proteins (OppD and OppF), two transmembrane proteins (OppB and OppC) and a solute-binding protein (OppA).

It localises to the cell inner membrane. It carries out the reaction a [peptide](out) + ATP + H2O = a [peptide](in) + ADP + phosphate + H(+). The enzyme catalyses L-alanyl-gamma-D-glutamyl-meso-2,6-diaminopimelate(out) + ATP + H2O = L-alanyl-gamma-D-glutamyl-meso-2,6-diaminopimelate(in) + ADP + phosphate + H(+). In terms of biological role, part of the ABC transporter complex OppABCDF involved in the uptake of oligopeptides, including the cell wall murein tripeptide L-alanyl-gamma-D-glutamyl-meso-diaminopimelate. Probably responsible for energy coupling to the transport system. Plays an important nutritional role and is involved in the recycling of cell wall peptides. In Salmonella typhimurium (strain LT2 / SGSC1412 / ATCC 700720), this protein is Oligopeptide transport ATP-binding protein OppF.